Consider the following 404-residue polypeptide: Acetylornithine/succinyldiaminopimelate aminotransferase (404 aa).

Pyridoxal 5'-phosphate contacts are provided by residues 108–109 (GA) and Phe-141. Arg-144 lines the N(2)-acetyl-L-ornithine pocket. Pyridoxal 5'-phosphate is bound at residue 226–229 (DEIQ). At Lys-255 the chain carries N6-(pyridoxal phosphate)lysine. Residue Thr-283 participates in N(2)-acetyl-L-ornithine binding. Residue Thr-284 participates in pyridoxal 5'-phosphate binding.

The protein belongs to the class-III pyridoxal-phosphate-dependent aminotransferase family. ArgD subfamily. In terms of assembly, homodimer. Pyridoxal 5'-phosphate is required as a cofactor.

The protein localises to the cytoplasm. The catalysed reaction is N(2)-acetyl-L-ornithine + 2-oxoglutarate = N-acetyl-L-glutamate 5-semialdehyde + L-glutamate. The enzyme catalyses N-succinyl-(2S,6S)-2,6-diaminopimelate + 2-oxoglutarate = (S)-2-succinylamino-6-oxoheptanedioate + L-glutamate. It participates in amino-acid biosynthesis; L-arginine biosynthesis; N(2)-acetyl-L-ornithine from L-glutamate: step 4/4. It functions in the pathway amino-acid biosynthesis; L-lysine biosynthesis via DAP pathway; LL-2,6-diaminopimelate from (S)-tetrahydrodipicolinate (succinylase route): step 2/3. In terms of biological role, involved in both the arginine and lysine biosynthetic pathways. The protein is Acetylornithine/succinyldiaminopimelate aminotransferase of Buchnera aphidicola subsp. Schizaphis graminum (strain Sg).